The sequence spans 735 residues: Catalase-peroxidase (735 aa).

Composition is skewed to polar residues over residues 1–10 (MENQNRQNAA) and 17–26 (SVTNQSSNRT). The tract at residues 1-30 (MENQNRQNAAQCPFHGSVTNQSSNRTTNKD) is disordered. Positions 100 to 223 (WHSAGTYRIG…LAAVQMGLIY (124 aa)) form a cross-link, tryptophyl-tyrosyl-methioninium (Trp-Tyr) (with M-249). The active-site Proton acceptor is histidine 101. The tryptophyl-tyrosyl-methioninium (Tyr-Met) (with W-100) cross-link spans 223–249 (YVNPEGPDGKPDPKAAARDIRETFRRM). Histidine 264 serves as a coordination point for heme b.

Belongs to the peroxidase family. Peroxidase/catalase subfamily. In terms of assembly, homodimer or homotetramer. Requires heme b as cofactor. Formation of the three residue Trp-Tyr-Met cross-link is important for the catalase, but not the peroxidase activity of the enzyme.

The enzyme catalyses H2O2 + AH2 = A + 2 H2O. The catalysed reaction is 2 H2O2 = O2 + 2 H2O. In terms of biological role, bifunctional enzyme with both catalase and broad-spectrum peroxidase activity. Also displays NADH oxidase, INH lyase and isonicotinoyl-NAD synthase activities. The polypeptide is Catalase-peroxidase (Geobacillus stearothermophilus (Bacillus stearothermophilus)).